The following is a 303-amino-acid chain: UDP-3-O-acyl-N-acetylglucosamine deacetylase (303 aa).

3 residues coordinate Zn(2+): His-77, His-236, and Asp-240. The active-site Proton donor is His-263.

The protein belongs to the LpxC family. The cofactor is Zn(2+).

The enzyme catalyses a UDP-3-O-[(3R)-3-hydroxyacyl]-N-acetyl-alpha-D-glucosamine + H2O = a UDP-3-O-[(3R)-3-hydroxyacyl]-alpha-D-glucosamine + acetate. It functions in the pathway glycolipid biosynthesis; lipid IV(A) biosynthesis; lipid IV(A) from (3R)-3-hydroxytetradecanoyl-[acyl-carrier-protein] and UDP-N-acetyl-alpha-D-glucosamine: step 2/6. Its function is as follows. Catalyzes the hydrolysis of UDP-3-O-myristoyl-N-acetylglucosamine to form UDP-3-O-myristoylglucosamine and acetate, the committed step in lipid A biosynthesis. The sequence is that of UDP-3-O-acyl-N-acetylglucosamine deacetylase from Ruthia magnifica subsp. Calyptogena magnifica.